Consider the following 127-residue polypeptide: Protein translocase subunit SecE (127 aa).

A run of 3 helical transmembrane segments spans residues 16–36, 42–62, and 98–118; these read IAKWSFLGILIILFILSNHYY, IFQNILLTSLTILSTGLIFLT, and IIVTILLALILWGLDNILIWF.

This sequence belongs to the SecE/SEC61-gamma family. Component of the Sec protein translocase complex. Heterotrimer consisting of SecY, SecE and SecG subunits. The heterotrimers can form oligomers, although 1 heterotrimer is thought to be able to translocate proteins. Interacts with the ribosome. Interacts with SecDF, and other proteins may be involved. Interacts with SecA.

It localises to the cell membrane. Functionally, essential subunit of the Sec protein translocation channel SecYEG. Clamps together the 2 halves of SecY. May contact the channel plug during translocation. The protein is Protein translocase subunit SecE of Buchnera aphidicola subsp. Baizongia pistaciae (strain Bp).